Consider the following 169-residue polypeptide: Protein-export protein SecB (169 aa).

Belongs to the SecB family. As to quaternary structure, homotetramer, a dimer of dimers. One homotetramer interacts with 1 SecA dimer.

The protein localises to the cytoplasm. One of the proteins required for the normal export of preproteins out of the cell cytoplasm. It is a molecular chaperone that binds to a subset of precursor proteins, maintaining them in a translocation-competent state. It also specifically binds to its receptor SecA. The protein is Protein-export protein SecB of Alteromonas mediterranea (strain DSM 17117 / CIP 110805 / LMG 28347 / Deep ecotype).